We begin with the raw amino-acid sequence, 369 residues long: Anhydro-N-acetylmuramic acid kinase (369 aa).

12–19 (GTSMDGVD) is an ATP binding site.

Belongs to the anhydro-N-acetylmuramic acid kinase family.

It catalyses the reaction 1,6-anhydro-N-acetyl-beta-muramate + ATP + H2O = N-acetyl-D-muramate 6-phosphate + ADP + H(+). The protein operates within amino-sugar metabolism; 1,6-anhydro-N-acetylmuramate degradation. It participates in cell wall biogenesis; peptidoglycan recycling. Its function is as follows. Catalyzes the specific phosphorylation of 1,6-anhydro-N-acetylmuramic acid (anhMurNAc) with the simultaneous cleavage of the 1,6-anhydro ring, generating MurNAc-6-P. Is required for the utilization of anhMurNAc either imported from the medium or derived from its own cell wall murein, and thus plays a role in cell wall recycling. The protein is Anhydro-N-acetylmuramic acid kinase of Shewanella pealeana (strain ATCC 700345 / ANG-SQ1).